A 131-amino-acid chain; its full sequence is UPF0102 protein YraN (131 aa).

Positions Met-1 to Thr-19 are enriched in polar residues. The interval Met-1–Gly-20 is disordered.

The protein belongs to the UPF0102 family.

This Escherichia fergusonii (strain ATCC 35469 / DSM 13698 / CCUG 18766 / IAM 14443 / JCM 21226 / LMG 7866 / NBRC 102419 / NCTC 12128 / CDC 0568-73) protein is UPF0102 protein YraN.